The chain runs to 224 residues: UPF0758 protein Neut_0782 (224 aa).

The MPN domain occupies 102–224 (IMDSPQSVRS…TVSFAERGLI (123 aa)). Residues His-173, His-175, and Asp-186 each contribute to the Zn(2+) site. The short motif at 173–186 (HNHPSGVAEPSRAD) is the JAMM motif element.

This sequence belongs to the UPF0758 family.

This is UPF0758 protein Neut_0782 from Nitrosomonas eutropha (strain DSM 101675 / C91 / Nm57).